A 186-amino-acid chain; its full sequence is Small ribosomal subunit protein uS5 (186 aa).

Residues 20–83 (FVDKLVHINR…EAAKRDMIFV (64 aa)) enclose the S5 DRBM domain.

The protein belongs to the universal ribosomal protein uS5 family. Part of the 30S ribosomal subunit. Contacts proteins S4 and S8.

In terms of biological role, with S4 and S12 plays an important role in translational accuracy. Its function is as follows. Located at the back of the 30S subunit body where it stabilizes the conformation of the head with respect to the body. The protein is Small ribosomal subunit protein uS5 of Brucella ovis (strain ATCC 25840 / 63/290 / NCTC 10512).